The primary structure comprises 773 residues: Protein FAM149A (773 aa).

2 stretches are compositionally biased toward low complexity: residues threonine 18–alanine 37 and leucine 54–alanine 90. Disordered regions lie at residues threonine 18–glycine 155, aspartate 173–proline 210, phenylalanine 232–glycine 264, and threonine 568–leucine 613. A compositionally biased stretch (acidic residues) spans isoleucine 174–aspartate 186. Over residues threonine 245 to glycine 264 the composition is skewed to low complexity.

The protein belongs to the FAM149 family.

The protein is Protein FAM149A (FAM149A) of Homo sapiens (Human).